A 150-amino-acid polypeptide reads, in one-letter code: MDTMQGESNIVEIWTDGGCKPNPGPGGWAAILLYRGTEKELSGFDPETTNNRMELTAAAAALEALTRPCKVVLNTDSEYVRNGITRWKDGWVRRNWRNASGDPVANMDLWRRLLDAAARHEIDWRWVRGHAGNPMNERADQLATKARMEG.

Positions 7-148 (ESNIVEIWTD…ADQLATKARM (142 aa)) constitute an RNase H type-1 domain. The Mg(2+) site is built by Asp16, Glu54, Asp76, and Asp140.

The protein belongs to the RNase H family. As to quaternary structure, monomer. Mg(2+) is required as a cofactor.

It localises to the cytoplasm. It carries out the reaction Endonucleolytic cleavage to 5'-phosphomonoester.. In terms of biological role, endonuclease that specifically degrades the RNA of RNA-DNA hybrids. The chain is Ribonuclease H from Granulibacter bethesdensis (strain ATCC BAA-1260 / CGDNIH1).